A 340-amino-acid chain; its full sequence is UPF0324 membrane protein BA_5405/GBAA_5405/BAS5024 (340 aa).

10 consecutive transmembrane segments (helical) span residues 13–35 (FGFSQGIGITLLIAIVAKYLAEL), 40–59 (IMGQLVIAILIGMVWRAAIG), 99–118 (VLVIAAVVITFTLFVVYGLT), 128–150 (GILTACGTAICGAAAVVAIAPQV), 157–179 (TAVGAAIIAILGTIFTLIYTLLY), 189–211 (YGVFSGATLHEIAHVIAAAAPGG), 218–240 (AVIVKLTRVTMLVPVAILIGVWF), 255–277 (LPIPWFIFGFLAMSAVHSLGIIP), 279–301 (VVAGYIVVLAYMLIAMAMAGLGL), and 316–338 (FVAGLIGSVCLSVLGYVLVYALG).

It belongs to the UPF0324 family.

The protein resides in the cell membrane. In Bacillus anthracis, this protein is UPF0324 membrane protein BA_5405/GBAA_5405/BAS5024.